A 169-amino-acid chain; its full sequence is Putative phosphoesterase BLi01284/BL02661 (169 aa).

H34 acts as the Proton donor in catalysis. Short sequence motifs (HXTX) lie at residues 34-37 (HLTL) and 115-118 (HVTV). H115 functions as the Proton acceptor in the catalytic mechanism.

It belongs to the 2H phosphoesterase superfamily. YjcG family.

The chain is Putative phosphoesterase BLi01284/BL02661 from Bacillus licheniformis (strain ATCC 14580 / DSM 13 / JCM 2505 / CCUG 7422 / NBRC 12200 / NCIMB 9375 / NCTC 10341 / NRRL NRS-1264 / Gibson 46).